We begin with the raw amino-acid sequence, 336 residues long: Torsin-1B (336 aa).

The first 24 residues, 1 to 24 (MLRAGWLRGAAALALLLAARVVAA), serve as a signal peptide directing secretion. Asparagine 64 carries an N-linked (GlcNAc...) asparagine glycan. An ATP-binding site is contributed by 109 to 116 (GWAGTGKN). An N-linked (GlcNAc...) asparagine glycan is attached at asparagine 165.

It belongs to the ClpA/ClpB family. Torsin subfamily. As to quaternary structure, homohexamer. Interacts with TOR1A; the interaction may be specific of neural tissues. Interacts with TOR1AIP1; TOR1AIP1 is required for TOR1B location on the nuclear membrane. Interacts (ATP-bound) with TOR1AIP2; important for endoplasmic reticulum integrity. Post-translationally, N-glycosylated. In terms of tissue distribution, widely expressed with low levels in brain.

The protein resides in the endoplasmic reticulum lumen. The protein localises to the nucleus membrane. The enzyme catalyses ATP + H2O = ADP + phosphate + H(+). Functionally, may serve as a molecular chaperone assisting in the proper folding of secreted and/or membrane proteins. Plays a role in non-neural cells nuclear envelope and endoplasmic reticulum integrity. May have a redundant function with TOR1A in non-neural tissues. This Homo sapiens (Human) protein is Torsin-1B (TOR1B).